We begin with the raw amino-acid sequence, 273 residues long: 4-hydroxy-tetrahydrodipicolinate reductase (273 aa).

Position 12–17 (glycine 12–methionine 17) interacts with NAD(+). Arginine 39 is a binding site for NADP(+). NAD(+) is bound by residues glycine 102–threonine 104 and alanine 126–phenylalanine 129. Histidine 159 acts as the Proton donor/acceptor in catalysis. Position 160 (histidine 160) interacts with (S)-2,3,4,5-tetrahydrodipicolinate. Lysine 163 acts as the Proton donor in catalysis. Glycine 169–threonine 170 contributes to the (S)-2,3,4,5-tetrahydrodipicolinate binding site.

It belongs to the DapB family. In terms of assembly, homotetramer.

It localises to the cytoplasm. It carries out the reaction (S)-2,3,4,5-tetrahydrodipicolinate + NAD(+) + H2O = (2S,4S)-4-hydroxy-2,3,4,5-tetrahydrodipicolinate + NADH + H(+). The catalysed reaction is (S)-2,3,4,5-tetrahydrodipicolinate + NADP(+) + H2O = (2S,4S)-4-hydroxy-2,3,4,5-tetrahydrodipicolinate + NADPH + H(+). The protein operates within amino-acid biosynthesis; L-lysine biosynthesis via DAP pathway; (S)-tetrahydrodipicolinate from L-aspartate: step 4/4. In terms of biological role, catalyzes the conversion of 4-hydroxy-tetrahydrodipicolinate (HTPA) to tetrahydrodipicolinate. This chain is 4-hydroxy-tetrahydrodipicolinate reductase, found in Serratia proteamaculans (strain 568).